Here is a 213-residue protein sequence, read N- to C-terminus: dITP/XTP pyrophosphatase (213 aa).

17 to 22 lines the substrate pocket; sequence SNNAGK. Catalysis depends on Asp78, which acts as the Proton acceptor. Residue Asp78 coordinates Mg(2+). Substrate-binding positions include Ser79, 164–167, Lys187, and 192–193; these read FGYD and HR.

Belongs to the HAM1 NTPase family. As to quaternary structure, homodimer. The cofactor is Mg(2+).

It carries out the reaction XTP + H2O = XMP + diphosphate + H(+). It catalyses the reaction dITP + H2O = dIMP + diphosphate + H(+). The enzyme catalyses ITP + H2O = IMP + diphosphate + H(+). Its function is as follows. Pyrophosphatase that catalyzes the hydrolysis of nucleoside triphosphates to their monophosphate derivatives, with a high preference for the non-canonical purine nucleotides XTP (xanthosine triphosphate), dITP (deoxyinosine triphosphate) and ITP. Seems to function as a house-cleaning enzyme that removes non-canonical purine nucleotides from the nucleotide pool, thus preventing their incorporation into DNA/RNA and avoiding chromosomal lesions. The chain is dITP/XTP pyrophosphatase from Bordetella parapertussis (strain 12822 / ATCC BAA-587 / NCTC 13253).